The primary structure comprises 425 residues: Imidazolonepropionase (425 aa).

Residues H82 and H84 each contribute to the Fe(3+) site. Positions 82 and 84 each coordinate Zn(2+). 4-imidazolone-5-propanoate is bound by residues R91, Y154, and H187. Y154 is an N-formimidoyl-L-glutamate binding site. H253 contributes to the Fe(3+) binding site. Position 253 (H253) interacts with Zn(2+). 4-imidazolone-5-propanoate is bound at residue E256. D328 contributes to the Fe(3+) binding site. D328 provides a ligand contact to Zn(2+). Residues N330 and G332 each coordinate N-formimidoyl-L-glutamate. Residue S333 participates in 4-imidazolone-5-propanoate binding.

The protein belongs to the metallo-dependent hydrolases superfamily. HutI family. Zn(2+) serves as cofactor. Requires Fe(3+) as cofactor.

It localises to the cytoplasm. It catalyses the reaction 4-imidazolone-5-propanoate + H2O = N-formimidoyl-L-glutamate. It participates in amino-acid degradation; L-histidine degradation into L-glutamate; N-formimidoyl-L-glutamate from L-histidine: step 3/3. Catalyzes the hydrolytic cleavage of the carbon-nitrogen bond in imidazolone-5-propanoate to yield N-formimidoyl-L-glutamate. It is the third step in the universal histidine degradation pathway. The chain is Imidazolonepropionase from Symbiobacterium thermophilum (strain DSM 24528 / JCM 14929 / IAM 14863 / T).